We begin with the raw amino-acid sequence, 437 residues long: Argininosuccinate lyase (437 aa).

It belongs to the lyase 1 family. Argininosuccinate lyase subfamily.

It is found in the cytoplasm. The catalysed reaction is 2-(N(omega)-L-arginino)succinate = fumarate + L-arginine. It functions in the pathway amino-acid biosynthesis; L-arginine biosynthesis; L-arginine from L-ornithine and carbamoyl phosphate: step 3/3. This Clostridium novyi (strain NT) protein is Argininosuccinate lyase.